The chain runs to 417 residues: Probable medium-chain specific acyl-CoA dehydrogenase 10, mitochondrial (417 aa).

Residues 1–15 (MLSRIATSSLGLSRS) constitute a mitochondrion transit peptide. Residues 148–157 (YCVTEPGAGS) and 181–183 (WIT) each bind FAD. Ser157 contacts substrate. 268 to 271 (DMTR) serves as a coordination point for substrate. Residues 306–307 (HQ) and 364–368 (QIFGG) each bind FAD. Glu391 (proton acceptor) is an active-site residue. Gly392 contributes to the substrate binding site. 393 to 395 (TSQ) contacts FAD.

The protein belongs to the acyl-CoA dehydrogenase family. In terms of assembly, homotetramer. The cofactor is FAD. As to expression, expressed in the epidermis and intestine.

The protein resides in the mitochondrion matrix. The catalysed reaction is a medium-chain 2,3-saturated fatty acyl-CoA + oxidized [electron-transfer flavoprotein] + H(+) = a medium-chain (2E)-enoyl-CoA + reduced [electron-transfer flavoprotein]. The protein operates within lipid metabolism; mitochondrial fatty acid beta-oxidation. Functionally, this enzyme is specific for acyl chain lengths of 4 to 16. This is Probable medium-chain specific acyl-CoA dehydrogenase 10, mitochondrial (acdh-10) from Caenorhabditis elegans.